Consider the following 159-residue polypeptide: MAEQVVEILVSGGKATAGPPLGPAIGPLGVNIMQVVQKINDMTKDYDGMSVPVKVIVDTDKRTFEVEVGIPPASALVKKELGIATGAQEPKHQVAGNLTMEQVVKIAKMKQDAMLAYNLKNASKEVIGTCVSVGVNVEGMTPKEAQKAIDAGQFDSYFN.

The protein belongs to the universal ribosomal protein uL11 family. As to quaternary structure, part of the ribosomal stalk of the 50S ribosomal subunit. Interacts with L10 and the large rRNA to form the base of the stalk. L10 forms an elongated spine to which L12 dimers bind in a sequential fashion forming a multimeric L10(L12)X complex.

Forms part of the ribosomal stalk which helps the ribosome interact with GTP-bound translation factors. The chain is Large ribosomal subunit protein uL11 from Methanococcus maripaludis (strain C5 / ATCC BAA-1333).